The following is a 565-amino-acid chain: NAD-dependent malic enzyme (565 aa).

Catalysis depends on Tyr104, which acts as the Proton donor. Arg157 serves as a coordination point for NAD(+). The active-site Proton acceptor is Lys175. A divalent metal cation contacts are provided by Glu246, Asp247, and Asp270. Positions 270 and 418 each coordinate NAD(+).

This sequence belongs to the malic enzymes family. In terms of assembly, homotetramer. It depends on Mg(2+) as a cofactor. The cofactor is Mn(2+).

The enzyme catalyses (S)-malate + NAD(+) = pyruvate + CO2 + NADH. The catalysed reaction is oxaloacetate + H(+) = pyruvate + CO2. This chain is NAD-dependent malic enzyme, found in Salmonella newport (strain SL254).